A 622-amino-acid chain; its full sequence is Palmitoyltransferase ZDHHC13 (622 aa).

An N-acetylmethionine modification is found at methionine 1. Over 1–291 the chain is Cytoplasmic; sequence MEGPGLGSQC…RLWRWLQKCE (291 aa). ANK repeat units follow at residues 43-78, 81-110, 115-144, 148-177, 181-211, 216-245, and 249-277; these read PLIE…VRQP, ENVS…VVDQ, LNST…DPTL, EGFS…SVNM, NGQT…SLNV, HQNT…SLDI, and KGET…KMRA. A helical transmembrane segment spans residues 292 to 312; sequence LFLLLMLSVITMWAIGYILDF. Residues 313 to 320 are Lumenal-facing; it reads NSDSWLLK. A helical transmembrane segment spans residues 321-341; it reads GCLLVTLFFLTSLFPRFLVGY. Residues 342–347 lie on the Cytoplasmic side of the membrane; sequence KNLVYL. The helical transmembrane segment at 348-368 threads the bilayer; sequence PTAFLLSSVFWIFMTWFILFF. Residues 369–370 are Lumenal-facing; sequence PD. A helical membrane pass occupies residues 371–391; sequence LAGAPFYFSFIFSIVAFLYFF. Residues 392–470 lie on the Cytoplasmic side of the membrane; that stretch reads YKTWATDPGF…RCIGFGNHHY (79 aa). Positions 426-476 constitute a DHHC domain; sequence TFCTSCLIRKPLRSLHCHVCNCCVARYDQHCLWTGRCIGFGNHHYYIFFLF. Cysteine 456 functions as the S-palmitoyl cysteine intermediate in the catalytic mechanism. The helical transmembrane segment at 471 to 491 threads the bilayer; sequence YIFFLFFLSMVCGWIIYGSFI. The Lumenal segment spans residues 492-518; it reads YLSSHCATTFKEDGLWTYLNQIVACSP. The chain crosses the membrane as a helical span at residues 519 to 539; the sequence is WVLYILMLATFHFSWSTFLLL. Residues 540 to 622 lie on the Cytoplasmic side of the membrane; the sequence is NQLFQIAFLG…PAREKVLRSV (83 aa).

Belongs to the DHHC palmitoyltransferase family. AKR/ZDHHC17 subfamily. As to quaternary structure, interacts (via ANK repeats) with CLIP3. Interacts (via ANK repeats) with DNAJC5 (via C-terminus). Interacts (via ANK repeats) with HTT. Interacts (via ANK repeats) with MAP6. Interacts (via ANK repeats) with SNAP23. Interacts (via ANK repeats) with SNAP25. May interact (via ANK repeats) with SPRED2.

The protein localises to the golgi apparatus membrane. It localises to the cytoplasmic vesicle membrane. The enzyme catalyses L-cysteinyl-[protein] + hexadecanoyl-CoA = S-hexadecanoyl-L-cysteinyl-[protein] + CoA. In terms of biological role, palmitoyltransferase that could catalyze the addition of palmitate onto various protein substrates. Palmitoyltransferase for HTT and GAD2. May play a role in Mg(2+) transport. In Homo sapiens (Human), this protein is Palmitoyltransferase ZDHHC13.